The chain runs to 132 residues: Small ribosomal subunit protein uS8c (132 aa).

The protein belongs to the universal ribosomal protein uS8 family. In terms of assembly, part of the 30S ribosomal subunit.

The protein localises to the plastid. Its subcellular location is the chloroplast. One of the primary rRNA binding proteins, it binds directly to 16S rRNA central domain where it helps coordinate assembly of the platform of the 30S subunit. In Physcomitrium patens (Spreading-leaved earth moss), this protein is Small ribosomal subunit protein uS8c (rps8).